Reading from the N-terminus, the 276-residue chain is Undecaprenyl-diphosphatase (276 aa).

7 consecutive transmembrane segments (helical) span residues 1–21, 39–59, 84–104, 115–135, 188–208, 222–242, and 253–273; these read MSWLQVVVLSVLQGLTEFLPV, AGASFTAVSQLGTEVAVLVYF, YWLGWWVIIGTIPISVVGLLF, LWLVATAMIVFSFVIAAAEYY, FGFLLAIPAVFASGLFSLPDA, QLFVSIVIAFVVGYAAVAWFL, and FVGYRIVLGTVVLVLLSAGVV.

The protein belongs to the UppP family.

It is found in the cell membrane. The enzyme catalyses di-trans,octa-cis-undecaprenyl diphosphate + H2O = di-trans,octa-cis-undecaprenyl phosphate + phosphate + H(+). Catalyzes the dephosphorylation of undecaprenyl diphosphate (UPP). Confers resistance to bacitracin. This Mycolicibacterium vanbaalenii (strain DSM 7251 / JCM 13017 / BCRC 16820 / KCTC 9966 / NRRL B-24157 / PYR-1) (Mycobacterium vanbaalenii) protein is Undecaprenyl-diphosphatase.